The following is a 429-amino-acid chain: Cytochrome c biogenesis protein CcsB (429 aa).

Transmembrane regions (helical) follow at residues 14-34, 72-92, and 162-182; these read LKVA…GTAL, SFWF…CSWK, and VGPP…TYGV.

The protein belongs to the Ccs1/CcsB family. As to quaternary structure, may interact with CcsA.

It is found in the cellular thylakoid membrane. In terms of biological role, required during biogenesis of c-type cytochromes (cytochrome c6 and cytochrome f) at the step of heme attachment. The protein is Cytochrome c biogenesis protein CcsB of Prochlorococcus marinus (strain SARG / CCMP1375 / SS120).